We begin with the raw amino-acid sequence, 199 residues long: Protein GrpE (199 aa).

A compositionally biased stretch (basic and acidic residues) spans 1 to 24 (MSKQNKKDWKKFKDEHKEEHKVEN). The tract at residues 1–47 (MSKQNKKDWKKFKDEHKEEHKVENEILEEEIDEKSQHQEPALGHPSY) is disordered.

It belongs to the GrpE family. As to quaternary structure, homodimer.

Its subcellular location is the cytoplasm. Its function is as follows. Participates actively in the response to hyperosmotic and heat shock by preventing the aggregation of stress-denatured proteins, in association with DnaK and GrpE. It is the nucleotide exchange factor for DnaK and may function as a thermosensor. Unfolded proteins bind initially to DnaJ; upon interaction with the DnaJ-bound protein, DnaK hydrolyzes its bound ATP, resulting in the formation of a stable complex. GrpE releases ADP from DnaK; ATP binding to DnaK triggers the release of the substrate protein, thus completing the reaction cycle. Several rounds of ATP-dependent interactions between DnaJ, DnaK and GrpE are required for fully efficient folding. This chain is Protein GrpE, found in Legionella pneumophila (strain Paris).